Reading from the N-terminus, the 154-residue chain is MIITTWIVYILARKGAGLPFPPKVSSDVEVTETEAVSVVQHWLKKTEEEASQEIKEKMSTNFPPMQGQDVHVTRDVVKHHLSKSGLLANQSQEVLEERTRIQFIRWSHTRIFQVPSEARNEAMRDRIEQVRRSICHLSDEISQELRNRNSYSEC.

The transit peptide at M1–V24 directs the protein to the mitochondrion. Phosphoserine is present on residues S26 and S116.

Its subcellular location is the mitochondrion outer membrane. It localises to the mitochondrion. It is found in the cell projection. The protein localises to the cilium. The protein resides in the flagellum. In terms of biological role, essential for sperm motility and male fertility. Plays an important role in sperm motility by regulating the organization and function of the mitochondria and is also required for correct sperm midpiece assembly. The polypeptide is Spermatogenesis-associated protein 19, mitochondrial (SPATA19) (Bos taurus (Bovine)).